Here is a 469-residue protein sequence, read N- to C-terminus: Gamma-aminobutyric acid permease (469 aa).

Residues 1–17 (MNQSQSGLKKELKTRHM) lie on the Cytoplasmic side of the membrane. A helical transmembrane segment spans residues 18-38 (TMISIAGVIGAGLFVGSGSVI). Position 39 (His39) is a topological domain, extracellular. Residues 40–60 (STGPGAVVSYALAGLLVIFIM) traverse the membrane as a helical segment. Residues 61–94 (RMLGEMSAVNPTSGSFSQYAHDAIGPWAGFTIGW) lie on the Cytoplasmic side of the membrane. The helical transmembrane segment at 95–115 (LYWFFWVIVIAIEAIAGAGII) threads the bilayer. Residue Gln116 is a topological domain, extracellular. Residues 117–137 (YWFHDIPLWLTSLILTIVLTL) traverse the membrane as a helical segment. Topologically, residues 138-157 (TNVYSVKSFGEFEYWFSLIK) are cytoplasmic. Residues 158–178 (VVTIIAFLIVGFAFIFGFAPG) traverse the membrane as a helical segment. Residues 179 to 200 (SEPVGFSNLTGKGGFFPEGISS) lie on the Extracellular side of the membrane. A helical transmembrane segment spans residues 201-221 (VLLGIVVVIFSFMGTEIVAIA). The Cytoplasmic portion of the chain corresponds to 222–242 (AGETSNPIESVTKATRSVVWR). A helical transmembrane segment spans residues 243–263 (IIVFYVGSIAIVVALLPWNSA). At 264–269 (NILESP) the chain is on the extracellular side. A helical membrane pass occupies residues 270-290 (FVAVLEHIGVPAAAQIMNFIV). At 291–328 (LTAVLSCLNSGLYTTSRMLYSLAERNEAPRRFMKLSKK) the chain is on the cytoplasmic side. Residues 329–349 (GVPVQAIVAGTFFSYIAVVMN) traverse the membrane as a helical segment. The Extracellular portion of the chain corresponds to 350–355 (YFSPDT). Residues 356–376 (VFLFLVNSSGAIALLVYLVIA) form a helical membrane-spanning segment. The Cytoplasmic segment spans residues 377–401 (VSQLKMRKKLEKTNPEALKIKMWLF). The chain crosses the membrane as a helical span at residues 402-422 (PFLTYLTIIAICGILVSMAFI). Residues 423-425 (DSM) are Extracellular-facing. Residues 426 to 446 (RDELLLTGVITGIVLISYLVF) form a helical membrane-spanning segment. The Cytoplasmic segment spans residues 447 to 469 (RKRKVSEKAAANPVTQQQPDILP).

This sequence belongs to the amino acid-polyamine-organocation (APC) superfamily. Amino acid transporter (AAT) (TC 2.A.3.1) family.

It localises to the cell membrane. It carries out the reaction 4-aminobutanoate(in) + H(+)(in) = 4-aminobutanoate(out) + H(+)(out). The catalysed reaction is beta-alanine(in) + H(+)(in) = beta-alanine(out) + H(+)(out). The protein operates within amino-acid degradation; 4-aminobutanoate degradation. In terms of biological role, transporter for gamma-aminobutyrate (GABA). Can also transport beta-alanine. Can translocate several open-chain GABA analogs (3-aminobutyrate, 3-aminopropanoate, cis-4-aminobutenoate) across the membrane via counterflow against GABA, but cannot transport muscimol. Also functions as a low-affinity proline importer. The sequence is that of Gamma-aminobutyric acid permease from Bacillus subtilis (strain 168).